The chain runs to 215 residues: Pyrrolidone-carboxylate peptidase (215 aa).

Residues glutamate 80, cysteine 143, and histidine 167 contribute to the active site.

Belongs to the peptidase C15 family. In terms of assembly, homotetramer.

Its subcellular location is the cytoplasm. It carries out the reaction Release of an N-terminal pyroglutamyl group from a polypeptide, the second amino acid generally not being Pro.. Its function is as follows. Removes 5-oxoproline from various penultimate amino acid residues except L-proline. In Bacillus mycoides (strain KBAB4) (Bacillus weihenstephanensis), this protein is Pyrrolidone-carboxylate peptidase.